A 375-amino-acid polypeptide reads, in one-letter code: Enoyl-[acyl-carrier-protein] reductase [NADH] 1, chloroplastic (375 aa).

The N-terminal 67 residues, 1–67 (MGASAATGMQ…SSKRSGVAIR (67 aa)), are a transit peptide targeting the chloroplast. Residues glycine 91, tyrosine 98, 155-156 (DA), 202-203 (SL), and leucine 252 contribute to the NAD(+) site. Residues tyrosine 254 and tyrosine 264 each act as proton acceptor in the active site. Residues lysine 272 and 302-306 (LGSRA) each bind NAD(+).

Belongs to the short-chain dehydrogenases/reductases (SDR) family. FabI subfamily. Homotetramer.

The protein resides in the plastid. It is found in the chloroplast. The catalysed reaction is a 2,3-saturated acyl-[ACP] + NAD(+) = a (2E)-enoyl-[ACP] + NADH + H(+). The protein operates within lipid metabolism; fatty acid biosynthesis. Its function is as follows. Catalyzes the NAD-dependent reduction of a carbon-carbon double bond in an enoyl moiety that is covalently linked to an acyl carrier protein (ACP). Catalyzes the last reduction step in the de novo synthesis cycle of fatty acids. Involved in the elongation cycle of fatty acids which are used in lipid metabolism. Required for normal plant growth. The sequence is that of Enoyl-[acyl-carrier-protein] reductase [NADH] 1, chloroplastic from Oryza sativa subsp. japonica (Rice).